Consider the following 118-residue polypeptide: UPF0102 protein Csac_2148 (118 aa).

This sequence belongs to the UPF0102 family.

This Caldicellulosiruptor saccharolyticus (strain ATCC 43494 / DSM 8903 / Tp8T 6331) protein is UPF0102 protein Csac_2148.